A 101-amino-acid chain; its full sequence is uncharacterized protein (101 aa).

The N-terminal stretch at 1 to 18 (MSINALLYVLSLALLIWT) is a signal peptide. The helical transmembrane segment at 62 to 82 (FQFDSIPSSSLSLSPFPFLFF) threads the bilayer.

Its subcellular location is the membrane. This is an uncharacterized protein from Saccharomyces cerevisiae (strain ATCC 204508 / S288c) (Baker's yeast).